A 216-amino-acid polypeptide reads, in one-letter code: Large ribosomal subunit protein uL3 (216 aa).

This sequence belongs to the universal ribosomal protein uL3 family. In terms of assembly, part of the 50S ribosomal subunit. Forms a cluster with proteins L14 and L19.

Its function is as follows. One of the primary rRNA binding proteins, it binds directly near the 3'-end of the 23S rRNA, where it nucleates assembly of the 50S subunit. In Symbiobacterium thermophilum (strain DSM 24528 / JCM 14929 / IAM 14863 / T), this protein is Large ribosomal subunit protein uL3.